A 221-amino-acid polypeptide reads, in one-letter code: Thiamine-phosphate synthase (221 aa).

4-amino-2-methyl-5-(diphosphooxymethyl)pyrimidine-binding positions include 49–53 (QFREK) and Asn-85. Residues Asp-86 and Asp-105 each coordinate Mg(2+). Ser-124 lines the 4-amino-2-methyl-5-(diphosphooxymethyl)pyrimidine pocket. 151-153 (TQS) is a 2-[(2R,5Z)-2-carboxy-4-methylthiazol-5(2H)-ylidene]ethyl phosphate binding site. Residue Lys-154 participates in 4-amino-2-methyl-5-(diphosphooxymethyl)pyrimidine binding. 2-[(2R,5Z)-2-carboxy-4-methylthiazol-5(2H)-ylidene]ethyl phosphate-binding positions include Gly-183 and 203-204 (IS).

This sequence belongs to the thiamine-phosphate synthase family. Mg(2+) serves as cofactor.

The catalysed reaction is 2-[(2R,5Z)-2-carboxy-4-methylthiazol-5(2H)-ylidene]ethyl phosphate + 4-amino-2-methyl-5-(diphosphooxymethyl)pyrimidine + 2 H(+) = thiamine phosphate + CO2 + diphosphate. It catalyses the reaction 2-(2-carboxy-4-methylthiazol-5-yl)ethyl phosphate + 4-amino-2-methyl-5-(diphosphooxymethyl)pyrimidine + 2 H(+) = thiamine phosphate + CO2 + diphosphate. The enzyme catalyses 4-methyl-5-(2-phosphooxyethyl)-thiazole + 4-amino-2-methyl-5-(diphosphooxymethyl)pyrimidine + H(+) = thiamine phosphate + diphosphate. The protein operates within cofactor biosynthesis; thiamine diphosphate biosynthesis; thiamine phosphate from 4-amino-2-methyl-5-diphosphomethylpyrimidine and 4-methyl-5-(2-phosphoethyl)-thiazole: step 1/1. Functionally, condenses 4-methyl-5-(beta-hydroxyethyl)thiazole monophosphate (THZ-P) and 2-methyl-4-amino-5-hydroxymethyl pyrimidine pyrophosphate (HMP-PP) to form thiamine monophosphate (TMP). The protein is Thiamine-phosphate synthase of Histophilus somni (strain 129Pt) (Haemophilus somnus).